Here is a 340-residue protein sequence, read N- to C-terminus: Dihydroorotase (340 aa).

The Zn(2+) site is built by His14 and His16. Residues 16 to 18 and Asn42 each bind substrate; that span reads HLR. Zn(2+) is bound by residues Lys100, His137, and His175. Lys100 carries the post-translational modification N6-carboxylysine. Substrate is bound at residue His137. A substrate-binding site is contributed by Leu220. Asp248 contacts Zn(2+). Residue Asp248 is part of the active site. His252 and Ala264 together coordinate substrate.

This sequence belongs to the metallo-dependent hydrolases superfamily. DHOase family. Class II DHOase subfamily. In terms of assembly, homodimer. Zn(2+) is required as a cofactor.

The enzyme catalyses (S)-dihydroorotate + H2O = N-carbamoyl-L-aspartate + H(+). Its pathway is pyrimidine metabolism; UMP biosynthesis via de novo pathway; (S)-dihydroorotate from bicarbonate: step 3/3. Functionally, catalyzes the reversible cyclization of carbamoyl aspartate to dihydroorotate. The chain is Dihydroorotase from Sphingopyxis alaskensis (strain DSM 13593 / LMG 18877 / RB2256) (Sphingomonas alaskensis).